The primary structure comprises 493 residues: Probable cytosol aminopeptidase (493 aa).

The Mn(2+) site is built by Lys-265 and Asp-270. Residue Lys-277 is part of the active site. Mn(2+) contacts are provided by Asp-288, Asp-347, and Glu-349. Arg-351 is a catalytic residue.

The protein belongs to the peptidase M17 family. Requires Mn(2+) as cofactor.

Its subcellular location is the cytoplasm. It carries out the reaction Release of an N-terminal amino acid, Xaa-|-Yaa-, in which Xaa is preferably Leu, but may be other amino acids including Pro although not Arg or Lys, and Yaa may be Pro. Amino acid amides and methyl esters are also readily hydrolyzed, but rates on arylamides are exceedingly low.. The enzyme catalyses Release of an N-terminal amino acid, preferentially leucine, but not glutamic or aspartic acids.. Its function is as follows. Presumably involved in the processing and regular turnover of intracellular proteins. Catalyzes the removal of unsubstituted N-terminal amino acids from various peptides. The polypeptide is Probable cytosol aminopeptidase (Hydrogenovibrio crunogenus (strain DSM 25203 / XCL-2) (Thiomicrospira crunogena)).